The chain runs to 278 residues: Small ribosomal subunit protein uS3 (278 aa).

The region spanning 39 to 107 (VRDFLKKRLA…PVHVNIEEVR (69 aa)) is the KH type-2 domain. The tract at residues 217–278 (VENENEARRG…DAAAVEKEVS (62 aa)) is disordered. Basic and acidic residues predominate over residues 230 to 239 (PRNDAGDNRG).

This sequence belongs to the universal ribosomal protein uS3 family. Part of the 30S ribosomal subunit. Forms a tight complex with proteins S10 and S14.

Functionally, binds the lower part of the 30S subunit head. Binds mRNA in the 70S ribosome, positioning it for translation. In Aromatoleum aromaticum (strain DSM 19018 / LMG 30748 / EbN1) (Azoarcus sp. (strain EbN1)), this protein is Small ribosomal subunit protein uS3.